The primary structure comprises 120 residues: Flagellar protein FliT (120 aa).

Positions 1 to 50 (MERHQHLLSEYQQILTLSEQMLMLATVENWDALVDLEMAYLKAVENTANI) are required for homodimerization. Residues 60–98 (LQELLRQKLRSILENEIEIKRLLQRRLDKLSELVGQSTR) are fliD binding.

Belongs to the FliT family. As to quaternary structure, homodimer. Interacts with FliD and FlhC.

It localises to the cytoplasm. It is found in the cytosol. Functionally, dual-function protein that regulates the transcription of class 2 flagellar operons and that also acts as an export chaperone for the filament-capping protein FliD. As a transcriptional regulator, acts as an anti-FlhDC factor; it directly binds FlhC, thus inhibiting the binding of the FlhC/FlhD complex to class 2 promoters, resulting in decreased expression of class 2 flagellar operons. As a chaperone, effects FliD transition to the membrane by preventing its premature polymerization, and by directing it to the export apparatus. The protein is Flagellar protein FliT of Yersinia pseudotuberculosis serotype IB (strain PB1/+).